Here is a 436-residue protein sequence, read N- to C-terminus: UDP-N-acetylglucosamine 1-carboxyvinyltransferase 1 (436 aa).

22–23 lines the phosphoenolpyruvate pocket; that stretch reads KN. A UDP-N-acetyl-alpha-D-glucosamine-binding site is contributed by arginine 93. Cysteine 117 functions as the Proton donor in the catalytic mechanism. Position 117 is a 2-(S-cysteinyl)pyruvic acid O-phosphothioketal (cysteine 117). Residues 122–126, aspartate 306, and valine 328 contribute to the UDP-N-acetyl-alpha-D-glucosamine site; that span reads RPIDQ.

This sequence belongs to the EPSP synthase family. MurA subfamily.

It localises to the cytoplasm. The catalysed reaction is phosphoenolpyruvate + UDP-N-acetyl-alpha-D-glucosamine = UDP-N-acetyl-3-O-(1-carboxyvinyl)-alpha-D-glucosamine + phosphate. Its pathway is cell wall biogenesis; peptidoglycan biosynthesis. In terms of biological role, cell wall formation. Adds enolpyruvyl to UDP-N-acetylglucosamine. Essential for cell growth. This chain is UDP-N-acetylglucosamine 1-carboxyvinyltransferase 1, found in Bacillus subtilis (strain 168).